Reading from the N-terminus, the 434-residue chain is Alpha-enolase (434 aa).

S40 lines the Mg(2+) pocket. 2 residues coordinate substrate: H158 and E167. E210 acts as the Proton donor in catalysis. D245, E293, and D318 together coordinate Mg(2+). Positions 293 and 318 each coordinate substrate. K343 acts as the Proton acceptor in catalysis. Substrate is bound by residues 370–373 and K394; that span reads SHRS.

This sequence belongs to the enolase family. In terms of assembly, homodimer. Mg(2+) is required as a cofactor.

The protein localises to the cytoplasm. It carries out the reaction (2R)-2-phosphoglycerate = phosphoenolpyruvate + H2O. The protein operates within carbohydrate degradation; glycolysis; pyruvate from D-glyceraldehyde 3-phosphate: step 4/5. In terms of biological role, both an enzyme and a lens structural protein. The sequence is that of Alpha-enolase (ENO1) from Anas platyrhynchos (Mallard).